The sequence spans 337 residues: DNA-directed RNA polymerase subunit alpha (337 aa).

Residues 1–233 are alpha N-terminal domain (alpha-NTD); it reads MVREDVVGST…DLLIPFLHAE (233 aa). The interval 265–337 is alpha C-terminal domain (alpha-CTD); sequence KGIPLTCIFI…FAINLLNKKL (73 aa).

The protein belongs to the RNA polymerase alpha chain family. As to quaternary structure, in plastids the minimal PEP RNA polymerase catalytic core is composed of four subunits: alpha, beta, beta', and beta''. When a (nuclear-encoded) sigma factor is associated with the core the holoenzyme is formed, which can initiate transcription.

It is found in the plastid. Its subcellular location is the chloroplast. The enzyme catalyses RNA(n) + a ribonucleoside 5'-triphosphate = RNA(n+1) + diphosphate. DNA-dependent RNA polymerase catalyzes the transcription of DNA into RNA using the four ribonucleoside triphosphates as substrates. The sequence is that of DNA-directed RNA polymerase subunit alpha from Phalaenopsis aphrodite subsp. formosana (Moth orchid).